The sequence spans 134 residues: Small ribosomal subunit protein uS9 (134 aa).

The disordered stretch occupies residues 114 to 134; sequence EVERKKYGLKKARRAPQFSKR. The segment covering 120–134 has biased composition (basic residues); that stretch reads YGLKKARRAPQFSKR.

Belongs to the universal ribosomal protein uS9 family.

The chain is Small ribosomal subunit protein uS9 from Thermotoga neapolitana (strain ATCC 49049 / DSM 4359 / NBRC 107923 / NS-E).